We begin with the raw amino-acid sequence, 436 residues long: MNDSIKACLAAACLALPLLAQGAETLTIATVNNNDMIRMQRLSKVFEESHPDIALKWVVLEENVLRQRLTTDIATQGGQFDLLTIGMYEAALWGAKGWLEPMSGLPADYALDDLLPSVRDGLSVKGTLYALPFYAEASITYYRKDLFQQAGLRMPEQPTWTQLGEFAARLNRPDQGQYGICLRGKAGWGENMALIGTLANAFGARWFDERWQPEFSGGEWKKALDFYVSTLKRYGPPGASSNGFNENLALFNSGKCAIWVDASVAGSFVTDKSQSKVADATGFAFAPREVTDKGASWLYSWALAIPASSRAKDAAKAFATWATSQAYGKLVADREGVANVPPGTRASTYSEAYLAAAPFARVTLESLKRVDPNHPTLKPVPYVGIQLVTIPEFQAIGTQVGKLFSAALTGQMSSDQALAAAQQSTAREMKRAGYPK.

An N-terminal signal peptide occupies residues 1 to 22 (MNDSIKACLAAACLALPLLAQG).

This sequence belongs to the bacterial solute-binding protein 1 family.

It is found in the periplasm. Binds mannitol with high affinity. The protein is Mannitol-binding protein of Pseudomonas aeruginosa (strain ATCC 15692 / DSM 22644 / CIP 104116 / JCM 14847 / LMG 12228 / 1C / PRS 101 / PAO1).